Consider the following 517-residue polypeptide: Splicing factor U2AF 59 kDa subunit (517 aa).

The span at 1–13 (MDLSSRLSSGSSR) shows a compositional bias: low complexity. A disordered region spans residues 1–112 (MDLSSRLSSG…PSRERSVRSI (112 aa)). The span at 20-89 (DYRDEEPRRE…RRYDDYEPRS (70 aa)) shows a compositional bias: basic and acidic residues. 2 RRM domains span residues 310-388 (DKIY…FACV) and 418-509 (RVLQ…FYGE).

The protein belongs to the splicing factor SR family. As to quaternary structure, forms a heterodimer with the U2AF small subunit. Can also form a homodimer. U2AF large subunit (U2AF59), U2AF small subunit (U2AF23) and SF1 (bpb1) interact to form a complex required for complex A formation. Interacts with wat1/pop3.

The protein localises to the nucleus. Its function is as follows. Necessary for the splicing of pre-mRNA. The SF1-U2AF59-U2AF23 complex has a role in the recognition of the branch site (5'-UACUAAC-3'), the pyrimidine tract and the 3'-splice site at the 3'-end of introns. The protein is Splicing factor U2AF 59 kDa subunit (prp2) of Schizosaccharomyces pombe (strain 972 / ATCC 24843) (Fission yeast).